The sequence spans 706 residues: Lethal(3)malignant brain tumor-like protein 2 (706 aa).

The interval 1-85 (MEKPRGVEET…GTPRSLDGSG (85 aa)) is disordered. Serine 13 is modified (phosphoserine). Residues 15–26 (PMEEEEEDDDLE) show a composition bias toward acidic residues. Residues 39–50 (SSAGSESSSYLE) are compositionally biased toward low complexity. The span at 54–63 (EAEHEDREAG) shows a compositional bias: basic and acidic residues. Serine 68 bears the Phosphoserine mark. Threonine 77 is subject to Phosphothreonine. The FCS-type zinc-finger motif lies at 82 to 117 (DGSGSEPAVCEMCGIVGTREAFFSKTKRFCSVSCSR). Zn(2+) is bound by residues cysteine 91, cysteine 94, cysteine 111, and cysteine 115. 4 MBT repeats span residues 180–284 (FDWG…LVPP), 292–392 (TDWK…IKLS), 398–501 (MAHH…LTPP), and 509–605 (FSWE…LQPP). Serine 339 carries the post-translational modification Phosphoserine. A Glycyl lysine isopeptide (Lys-Gly) (interchain with G-Cter in SUMO2) cross-link involves residue lysine 406. Residues 606–669 (VATEPTTPLK…KAPSEPAPDE (64 aa)) are disordered. Residues 620-635 (TKKKKKQFGKKRKRIP) are compositionally biased toward basic residues. Glycyl lysine isopeptide (Lys-Gly) (interchain with G-Cter in SUMO2) cross-links involve residues lysine 648, lysine 660, and lysine 676. Positions 685 to 706 (ADKALSPELPVPVENIKQETDD) are disordered. At serine 690 the chain carries Phosphoserine. A Glycyl lysine isopeptide (Lys-Gly) (interchain with G-Cter in SUMO1); alternate cross-link involves residue lysine 701. Lysine 701 is covalently cross-linked (Glycyl lysine isopeptide (Lys-Gly) (interchain with G-Cter in SUMO2); alternate).

As to quaternary structure, part of the E2F6.com-1 complex in G0 phase composed of E2F6, MGA, MAX, TFDP1, CBX3, BAT8, EUHMTASE1, RING1, RNF2, MBLR, BAT8 and YAF2.

It is found in the nucleus. Its function is as follows. Putative Polycomb group (PcG) protein. PcG proteins maintain the transcriptionally repressive state of genes, probably via a modification of chromatin, rendering it heritably changed in its expressibility. Its association with a chromatin-remodeling complex suggests that it may contribute to prevent expression of genes that trigger the cell into mitosis. Binds to monomethylated and dimethylated 'Lys-20' on histone H4. Binds histone H3 peptides that are monomethylated or dimethylated on 'Lys-4', 'Lys-9' or 'Lys-27'. This Bos taurus (Bovine) protein is Lethal(3)malignant brain tumor-like protein 2 (L3MBTL2).